The sequence spans 549 residues: 65-kDa microtubule-associated protein 9 (549 aa).

3 coiled-coil regions span residues 36–123 (IEIE…ERKI), 160–199 (SLRK…CSVL), and 459–492 (GNRL…HQGQ). The interval 474-549 (EEKEQERRRK…SFSTPLSRHG (76 aa)) is disordered. A compositionally biased stretch (basic residues) spans 481–490 (RRKRDLKKHQ). S501 and S546 each carry phosphoserine. Over residues 514–549 (VSTNKRFVSSPHTPQTDSPHSAKSNQSFSTPLSRHG) the composition is skewed to polar residues.

The protein belongs to the MAP65/ASE1 family. Forms dimer. Binds to microtubules (MT).

The protein localises to the nucleus. The protein resides in the cytoplasm. It localises to the cytoskeleton. It is found in the spindle pole. The sequence is that of 65-kDa microtubule-associated protein 9 (MAP65-9) from Arabidopsis thaliana (Mouse-ear cress).